Reading from the N-terminus, the 295-residue chain is Methionine aminopeptidase (295 aa).

A substrate-binding site is contributed by His-62. Residues Asp-82, Asp-93, and His-153 each contribute to the a divalent metal cation site. His-161 lines the substrate pocket. A divalent metal cation contacts are provided by Glu-187 and Glu-280.

Belongs to the peptidase M24A family. Methionine aminopeptidase archaeal type 2 subfamily. Monomer. Requires Co(2+) as cofactor. Zn(2+) is required as a cofactor. It depends on Mn(2+) as a cofactor. Fe(2+) serves as cofactor.

The enzyme catalyses Release of N-terminal amino acids, preferentially methionine, from peptides and arylamides.. Its function is as follows. Removes the N-terminal methionine from nascent proteins. The N-terminal methionine is often cleaved when the second residue in the primary sequence is small and uncharged (Met-Ala-, Cys, Gly, Pro, Ser, Thr, or Val). The protein is Methionine aminopeptidase of Pyrococcus abyssi (strain GE5 / Orsay).